The following is a 378-amino-acid chain: tRNA (guanine(26)-N(2))-dimethyltransferase (378 aa).

The Trm1 methyltransferase domain occupies lysine 4 to valine 374. S-adenosyl-L-methionine-binding residues include arginine 44, arginine 69, aspartate 87, aspartate 114, and alanine 115. Positions 246, 249, 263, and 266 each coordinate Zn(2+).

This sequence belongs to the class I-like SAM-binding methyltransferase superfamily. Trm1 family.

The catalysed reaction is guanosine(26) in tRNA + 2 S-adenosyl-L-methionine = N(2)-dimethylguanosine(26) in tRNA + 2 S-adenosyl-L-homocysteine + 2 H(+). Dimethylates a single guanine residue at position 26 of a number of tRNAs using S-adenosyl-L-methionine as donor of the methyl groups. This Saccharolobus islandicus (strain L.S.2.15 / Lassen #1) (Sulfolobus islandicus) protein is tRNA (guanine(26)-N(2))-dimethyltransferase.